The chain runs to 167 residues: Endoribonuclease YbeY (167 aa).

The Zn(2+) site is built by His131, His135, and His141.

The protein belongs to the endoribonuclease YbeY family. Zn(2+) serves as cofactor.

The protein resides in the cytoplasm. In terms of biological role, single strand-specific metallo-endoribonuclease involved in late-stage 70S ribosome quality control and in maturation of the 3' terminus of the 16S rRNA. The sequence is that of Endoribonuclease YbeY from Rickettsia africae (strain ESF-5).